We begin with the raw amino-acid sequence, 452 residues long: Tripartite motif-containing protein 49C (452 aa).

An RING-type zinc finger spans residues 15 to 56 (CPLCMNYFIDPVTIDCGHSFCRPCFYLNWQDIPFLVQCSECT). Residues 88-129 (SEEQMCGTHRETKKIFCEVDRSLLCLLCSSSQEHRYHRHRPI) form a B box-type zinc finger. Cysteine 93, histidine 96, cysteine 115, and histidine 121 together coordinate Zn(2+). Residues 269 to 452 (ELSAGPITGL…LRPIFCCIHF (184 aa)) enclose the B30.2/SPRY domain.

The polypeptide is Tripartite motif-containing protein 49C (TRIM49C) (Homo sapiens (Human)).